The following is a 773-amino-acid chain: DEAD-box ATP-dependent RNA helicase 32 (773 aa).

Residues 28 to 71 (IDAGKPARGTRPPPLSKSSSSPADTAAAKRGAKGAGGVPSKAAG) form a disordered region. Over residues 43-56 (SKSSSSPADTAAAK) the composition is skewed to low complexity. The Q motif signature appears at 80-108 (ARFDELPLSNKTKDGLRKAGYTEMSEIQR). The 177-residue stretch at 111–287 (LPHALCGRDV…RVSLKDPEYI (177 aa)) folds into the Helicase ATP-binding domain. 124–131 (AKTGSGKT) is a binding site for ATP. A DEAD box motif is present at residues 235-238 (DEAD). The region spanning 309–462 (PLEQKLNMLW…IKKPNTEQLQ (154 aa)) is the Helicase C-terminal domain. Residues 664 to 715 (DKDKISQRYAEMLREMQEHDKEDKLEHKRILREKKLQKKLKLKRKRNEEMDA) adopt a coiled-coil conformation. The segment covering 699 to 708 (LQKKLKLKRK) has biased composition (basic residues). The interval 699–755 (LQKKLKLKRKRNEEMDAGSENSGSESDRDQRTASKGKKRYFNSDDEEGSKDAAKDGD) is disordered.

This sequence belongs to the DEAD box helicase family. DDX10/DBP4 subfamily.

The enzyme catalyses ATP + H2O = ADP + phosphate + H(+). The polypeptide is DEAD-box ATP-dependent RNA helicase 32 (Oryza sativa subsp. japonica (Rice)).